Consider the following 406-residue polypeptide: telomere-associated protein 1 (406 aa).

Residues 20 to 40 (EHHNGSHDNDDKDKEDKEKQN) show a composition bias toward basic and acidic residues. The interval 20-46 (EHHNGSHDNDDKDKEDKEKQNTEAVAA) is disordered. An HTH myb-type domain is found at 147-206 (TTRRVRLRWTQEETADLMEGCKVHGVGNWKKILTDPRFRFNNRTAVDLKDRFRTCFPEDY). Positions 175 to 202 (WKKILTDPRFRFNNRTAVDLKDRFRTCF) form a DNA-binding region, H-T-H motif. The 55-residue stretch at 234 to 288 (VNRKERRVFTPEEDERLLNGFMKHGPSWSNIQRDNELGLFERRSTDLRDRFRNAF) folds into the Myb-like domain. Positions 368–389 (TQELQPQAHSRKQQGGDGLKEE) are disordered.

The protein localises to the nucleus. Its subcellular location is the chromosome. It is found in the telomere. Functionally, telomere-binding protein that mediates telomere clustering by promoting formation of head-to-head dimers of DNA molecules through the telomeric tracts. Binds specifically 5'-TTAGTCAGGG-3' repeats in subtelomeric regions. This is telomere-associated protein 1 from Yarrowia lipolytica (strain CLIB 122 / E 150) (Yeast).